Reading from the N-terminus, the 549-residue chain is Arginine--tRNA ligase (549 aa).

The 'HIGH' region signature appears at 113 to 123; it reads ANPDGPLHIGH.

It belongs to the class-I aminoacyl-tRNA synthetase family.

It is found in the cytoplasm. It catalyses the reaction tRNA(Arg) + L-arginine + ATP = L-arginyl-tRNA(Arg) + AMP + diphosphate. This Archaeoglobus fulgidus (strain ATCC 49558 / DSM 4304 / JCM 9628 / NBRC 100126 / VC-16) protein is Arginine--tRNA ligase (argS).